The chain runs to 223 residues: Sigma non-opioid intracellular receptor 1 (223 aa).

The Lumenal portion of the chain corresponds to 1 to 9 (MPWAVGRRW). The segment at 2–8 (PWAVGRR) is targeting to endoplasmic reticulum-associated lipid droplets. The chain crosses the membrane as a helical span at residues 10–30 (AWITLFLTIVAVLIQAVWLWL). The Cytoplasmic portion of the chain corresponds to 31-223 (GTQSFVFQRE…LTTYLFGQDP (193 aa)). An important for ligand-binding region spans residues 99–106 (SLSEYVLL). Positions 177 to 223 (VIPSTLAFALSDTIFSTQDFLTLFYTLRAYARGLRLELTTYLFGQDP) are C-terminal hydrophobic region.

It belongs to the ERG2 family. Homotrimer. Interacts with KCNA2; cocaine consumption leads to increased interaction. Forms a ternary complex with ANK2 and ITPR3. The complex is disrupted by agonists. Interacts with KCNA4. Interacts with RNF112 in an oxidative stress-regulated manner. Expressed in ependymocytes and neurons throughout the CNS from the olfactory bulb to the spinal cord. Expressed by progenitor, mature and satellite oligodendrocytes and by Schwann cells (at protein level). Expressed in liver, intestine, kidney, brain, lung and heart. Expressed by retinal cells.

The protein localises to the nucleus inner membrane. The protein resides in the nucleus outer membrane. It localises to the nucleus envelope. Its subcellular location is the cytoplasmic vesicle. It is found in the endoplasmic reticulum membrane. The protein localises to the membrane. The protein resides in the lipid droplet. It localises to the cell junction. Its subcellular location is the cell membrane. It is found in the cell projection. The protein localises to the growth cone. The protein resides in the postsynaptic density membrane. In terms of biological role, functions in lipid transport from the endoplasmic reticulum and is involved in a wide array of cellular functions probably through regulation of the biogenesis of lipid microdomains at the plasma membrane. Involved in the regulation of different receptors it plays a role in BDNF signaling and EGF signaling. Also regulates ion channels like the potassium channel and could modulate neurotransmitter release. Plays a role in calcium signaling through modulation together with ANK2 of the ITP3R-dependent calcium efflux at the endoplasmic reticulum. Plays a role in several other cell functions including proliferation, survival and death. Originally identified for its ability to bind various psychoactive drugs it is involved in learning processes, memory and mood alteration. Necessary for proper mitochondrial axonal transport in motor neurons, in particular the retrograde movement of mitochondria. Plays a role in protecting cells against oxidative stress-induced cell death via its interaction with RNF112. This Rattus norvegicus (Rat) protein is Sigma non-opioid intracellular receptor 1 (Sigmar1).